Here is a 271-residue protein sequence, read N- to C-terminus: GATA transcription factor 19 (271 aa).

The segment at 1-23 (MAAEPPADGRDPPADDGAAGDGA) is disordered. One can recognise a Tify domain in the interval 33–68 (LSAASEQLTLVYQGEVYVFDPVPPQKVQAVLLVLGG). The 43-residue stretch at 95 to 137 (RVASLMRFREKRKERCFDKKIRYSVRKEVAQKMKRRKGQFAGR) folds into the CCT domain. A GATA-type zinc finger spans residues 166–193 (CQNCGISSRLTPAMRRGPAGPRSLCNAC). The segment at 238-271 (NQTTMKTDTEMVPEQEQKADVLPPTKEEDSMATS) is disordered. The span at 252–271 (QEQKADVLPPTKEEDSMATS) shows a compositional bias: basic and acidic residues.

The protein belongs to the type IV zinc-finger family. Class C subfamily.

It localises to the nucleus. In terms of biological role, transcriptional activator that specifically binds 5'-GATA-3' or 5'-GAT-3' motifs within gene promoters. In Oryza sativa subsp. japonica (Rice), this protein is GATA transcription factor 19.